A 407-amino-acid chain; its full sequence is Tryptophan 2,3-dioxygenase B (407 aa).

Substrate contacts are provided by residues Phe-71–His-75 and Arg-143. His-327 is a binding site for heme. Thr-341 provides a ligand contact to substrate.

The protein belongs to the tryptophan 2,3-dioxygenase family. Homotetramer. Dimer of dimers. It depends on heme as a cofactor.

The enzyme catalyses L-tryptophan + O2 = N-formyl-L-kynurenine. It functions in the pathway amino-acid degradation; L-tryptophan degradation via kynurenine pathway; L-kynurenine from L-tryptophan: step 1/2. Its function is as follows. Heme-dependent dioxygenase that catalyzes the oxidative cleavage of the L-tryptophan (L-Trp) pyrrole ring and converts L-tryptophan to N-formyl-L-kynurenine. Catalyzes the oxidative cleavage of the indole moiety. The polypeptide is Tryptophan 2,3-dioxygenase B (Danio rerio (Zebrafish)).